The primary structure comprises 129 residues: GEL complex subunit OPTI (129 aa).

At 1–44 the chain is on the cytoplasmic side; the sequence is MSGGRRKEEPPQPQLANGALKVSVWSKVLRSDAAWDDKDEFLDV. Residues 45-65 traverse the membrane as a helical segment; that stretch reads IYWFRQIIALVLGVIWGVLPL. Arg66 is a topological domain (lumenal). Residues 67–84 traverse the membrane as a helical segment; the sequence is GFLGIAGFCLINAGVLYL. Topologically, residues 85–103 are cytoplasmic; it reads YFSNYLQIDEEEYGGTWEL. A helical membrane pass occupies residues 104–127; it reads TKEGFMTSFALFMVIWIIFYTAIH. Over 128-129 the chain is Lumenal; sequence YD.

Belongs to the EMC6 family. As to quaternary structure, component of the GET- and EMC-like (GEL) complex, composed of RAB5IF/OPTI and TMCO1. The GEL complex is part of the multi-pass translocon (MPT) complex, composed of three subcomplexes, the GEL complex (composed of RAB5IF/OPTI and TMCO1), the BOS complex (composed of NCLN/Nicalin, NOMO1 and TMEM147) and the PAT complex (composed of WDR83OS/Asterix and CCDC47). The MPT complex associates with the SEC61 complex. Interacts with NDUFS3, NDUFA4, NDUFV1, NDUFA9 and NDUFS8 of the mitochondrial membrane respiratory chain NADH dehydrogenase (Complex I). Interacts with UQCRC2 of the ubiquinol-cytochrome c reductase complex (Complex III). Interacts with COX5A and COX7C of the cytochrome c oxidase complex (Complex IV). Expressed in neuronal cells.

It is found in the endoplasmic reticulum membrane. The protein localises to the mitochondrion inner membrane. Its function is as follows. Component of the multi-pass translocon (MPT) complex that mediates insertion of multi-pass membrane proteins into the lipid bilayer of membranes. The MPT complex takes over after the SEC61 complex: following membrane insertion of the first few transmembrane segments of proteins by the SEC61 complex, the MPT complex occludes the lateral gate of the SEC61 complex to promote insertion of subsequent transmembrane regions. Within the MPT complex, the GEL subcomplex may mediate insertion of transmembrane regions into the membrane. In addition to its role in multi-pass membrane insertion, RAB5IF/OPTI also acts as an assembly factor for mitochondrial respiratory complexes. The protein is GEL complex subunit OPTI of Mus musculus (Mouse).